A 212-amino-acid chain; its full sequence is Ribosomal RNA small subunit methyltransferase G (212 aa).

S-adenosyl-L-methionine contacts are provided by residues glycine 76, methionine 81, 127-128 (VE), and arginine 145.

Belongs to the methyltransferase superfamily. RNA methyltransferase RsmG family.

Its subcellular location is the cytoplasm. It catalyses the reaction guanosine(527) in 16S rRNA + S-adenosyl-L-methionine = N(7)-methylguanosine(527) in 16S rRNA + S-adenosyl-L-homocysteine. Its function is as follows. Specifically methylates the N7 position of guanine in position 527 of 16S rRNA. This chain is Ribosomal RNA small subunit methyltransferase G, found in Acinetobacter baylyi (strain ATCC 33305 / BD413 / ADP1).